A 323-amino-acid chain; its full sequence is Trihelix transcription factor GT-3a (323 aa).

A compositionally biased stretch (basic residues) spans 1 to 20 (MDRRNPFQHHHHHHQLHHHL). The segment at 1 to 51 (MDRRNPFQHHHHHHQLHHHLIQQQQLPPPPLSTTATMDPGGGGGGGERIPQ) is disordered. The region spanning 52-108 (WSIEETKELLAIREELDQTFMETKRNKLLWEVVAAKMADKGFVRSAEQCKSKWKNLV) is the Myb-like domain. Disordered regions lie at residues 147-176 (EATE…EPNQ), 190-220 (KRET…GTKA), and 269-297 (ELEE…ARAQ). Residues 164–176 (SDDEEEEVDEPNQ) are compositionally biased toward acidic residues.

In terms of assembly, homodimer. Heterodimer with GT-3B. As to expression, predominantly expressed in roots and flower buds.

It localises to the nucleus. Probable transcription factor that binds specifically to the core DNA sequence 5'-GTTAC-3'. This is Trihelix transcription factor GT-3a (GT-3A) from Arabidopsis thaliana (Mouse-ear cress).